The sequence spans 869 residues: Valine--tRNA ligase (869 aa).

The short motif at 47 to 57 (PYPTGNFHIGN) is the 'HIGH' region element. A 'KMSKS' region motif is present at residues 521–525 (KMSKS). An ATP-binding site is contributed by lysine 524.

Belongs to the class-I aminoacyl-tRNA synthetase family. ValS type 2 subfamily.

It is found in the cytoplasm. It carries out the reaction tRNA(Val) + L-valine + ATP = L-valyl-tRNA(Val) + AMP + diphosphate. Its function is as follows. Catalyzes the attachment of valine to tRNA(Val). As ValRS can inadvertently accommodate and process structurally similar amino acids such as threonine, to avoid such errors, it has a 'posttransfer' editing activity that hydrolyzes mischarged Thr-tRNA(Val) in a tRNA-dependent manner. The sequence is that of Valine--tRNA ligase from Methanosarcina acetivorans (strain ATCC 35395 / DSM 2834 / JCM 12185 / C2A).